Here is a 254-residue protein sequence, read N- to C-terminus: uncharacterized protein (254 aa).

A coiled-coil region spans residues 66–111; sequence DMVSEMNKRMDDLAARIVVLEDEKAELRRINQRLTEKVRDKDMEKA.

This is an uncharacterized protein from Ostreid herpesvirus 1 (isolate France) (OsHV-1).